We begin with the raw amino-acid sequence, 241 residues long: MNIDKIFENPSNLRSFEFNNDVCKVFDDMVSRSVPGYHNIQDIISLTYDEFSQNRVFIDVGCSTGTTIAKILSENQVNYCYGIDISESMLAIAQEKCGEHESLVTFKNCNLLNGTDNVINSEKVPDFIILNLVLQFIRPPERKKFITNIKSLCSSSTLMLVFEKIIFNDAEINMKYIDSYLKWKGKNGYSESEVSNKRKALENKLIPYLHEENIELFKSSGFNSVEICFSFLNFRGYLCRC.

Residues Tyr37, 61-63 (GCS), Asn131, and Arg198 each bind S-adenosyl-L-methionine.

It belongs to the class I-like SAM-binding methyltransferase superfamily. Cx-SAM synthase family. As to quaternary structure, homodimer.

The catalysed reaction is prephenate + S-adenosyl-L-methionine = carboxy-S-adenosyl-L-methionine + 3-phenylpyruvate + H2O. Functionally, catalyzes the conversion of S-adenosyl-L-methionine (SAM) to carboxy-S-adenosyl-L-methionine (Cx-SAM). The sequence is that of Carboxy-S-adenosyl-L-methionine synthase 1 from Yersinia pseudotuberculosis serotype IB (strain PB1/+).